The chain runs to 133 residues: Large ribosomal subunit protein eL32y (133 aa).

The protein belongs to the eukaryotic ribosomal protein eL32 family.

This chain is Large ribosomal subunit protein eL32y (RPL32B), found in Arabidopsis thaliana (Mouse-ear cress).